We begin with the raw amino-acid sequence, 453 residues long: Tubulin delta chain (453 aa).

143–149 (AGGTGSG) lines the GTP pocket.

It belongs to the tubulin family. In terms of assembly, found in a complex with TEDC1, TEDC2, TUBE1 and TUBD1.

It localises to the nucleus. The protein localises to the cytoplasm. The protein resides in the cytoskeleton. Its subcellular location is the microtubule organizing center. It is found in the centrosome. It localises to the centriole. The protein localises to the cell projection. The protein resides in the cilium. Its function is as follows. Acts as a positive regulator of hedgehog signaling and regulates ciliary function. In Canis lupus familiaris (Dog), this protein is Tubulin delta chain (TUBD1).